A 436-amino-acid chain; its full sequence is UDP-N-acetylmuramate--L-alanine ligase (436 aa).

G108–S114 is an ATP binding site.

It belongs to the MurCDEF family.

It is found in the cytoplasm. It catalyses the reaction UDP-N-acetyl-alpha-D-muramate + L-alanine + ATP = UDP-N-acetyl-alpha-D-muramoyl-L-alanine + ADP + phosphate + H(+). The protein operates within cell wall biogenesis; peptidoglycan biosynthesis. In terms of biological role, cell wall formation. The protein is UDP-N-acetylmuramate--L-alanine ligase of Bacillus cereus (strain G9842).